The following is a 71-amino-acid chain: Vitellogenin-B1 (71 aa).

The N-terminal stretch at 1–15 (MRGIILAQLLALAGS) is a signal peptide. Positions 24-71 (FSESKPYVYNYEGIILNGIPENGLARSGIKLNCKAEISGYAQRSYMLK) constitute a Vitellogenin domain.

As to expression, produced by the liver, secreted into the blood and then sequestered by receptor mediated endocytosis into growing oocytes, where it is generally cleaved, giving rise to the respective yolk components.

Precursor of the major egg-yolk proteins that are sources of nutrients during early development of oviparous organisms. This is Vitellogenin-B1 from Xenopus laevis (African clawed frog).